Here is a 482-residue protein sequence, read N- to C-terminus: tRNA sulfurtransferase (482 aa).

A THUMP domain is found at P61–R165. ATP-binding positions include L183–I184, K265, G287, and Q296. A disulfide bond links C344 and C456. The region spanning F404 to P482 is the Rhodanese domain. The active-site Cysteine persulfide intermediate is the C456.

It belongs to the ThiI family.

It localises to the cytoplasm. It catalyses the reaction [ThiI sulfur-carrier protein]-S-sulfanyl-L-cysteine + a uridine in tRNA + 2 reduced [2Fe-2S]-[ferredoxin] + ATP + H(+) = [ThiI sulfur-carrier protein]-L-cysteine + a 4-thiouridine in tRNA + 2 oxidized [2Fe-2S]-[ferredoxin] + AMP + diphosphate. The enzyme catalyses [ThiS sulfur-carrier protein]-C-terminal Gly-Gly-AMP + S-sulfanyl-L-cysteinyl-[cysteine desulfurase] + AH2 = [ThiS sulfur-carrier protein]-C-terminal-Gly-aminoethanethioate + L-cysteinyl-[cysteine desulfurase] + A + AMP + 2 H(+). Its pathway is cofactor biosynthesis; thiamine diphosphate biosynthesis. In terms of biological role, catalyzes the ATP-dependent transfer of a sulfur to tRNA to produce 4-thiouridine in position 8 of tRNAs, which functions as a near-UV photosensor. Also catalyzes the transfer of sulfur to the sulfur carrier protein ThiS, forming ThiS-thiocarboxylate. This is a step in the synthesis of thiazole, in the thiamine biosynthesis pathway. The sulfur is donated as persulfide by IscS. The chain is tRNA sulfurtransferase from Klebsiella pneumoniae subsp. pneumoniae (strain ATCC 700721 / MGH 78578).